We begin with the raw amino-acid sequence, 124 residues long: Small ribosomal subunit protein bS6 (124 aa).

The disordered stretch occupies residues 96–124 (ETGPSPMMKEVQREEAKKAAAAQPTEAQA). The span at 114-124 (AAAAQPTEAQA) shows a compositional bias: low complexity.

It belongs to the bacterial ribosomal protein bS6 family.

In terms of biological role, binds together with bS18 to 16S ribosomal RNA. The chain is Small ribosomal subunit protein bS6 from Burkholderia mallei (strain ATCC 23344).